A 320-amino-acid chain; its full sequence is Fructose-1,6-bisphosphatase class 1 (320 aa).

Mg(2+) is bound by residues E93, D114, L116, and D117. Substrate is bound by residues 117–120, Y225, and K256; that span reads DGSS. Residue E262 participates in Mg(2+) binding.

The protein belongs to the FBPase class 1 family. As to quaternary structure, homotetramer. Mg(2+) is required as a cofactor.

It localises to the cytoplasm. The catalysed reaction is beta-D-fructose 1,6-bisphosphate + H2O = beta-D-fructose 6-phosphate + phosphate. The protein operates within carbohydrate biosynthesis; gluconeogenesis. This chain is Fructose-1,6-bisphosphatase class 1, found in Syntrophotalea carbinolica (strain DSM 2380 / NBRC 103641 / GraBd1) (Pelobacter carbinolicus).